Reading from the N-terminus, the 177-residue chain is Nucleoside triphosphate/diphosphate phosphatase (177 aa).

R23 functions as the Proton donor in the catalytic mechanism. Mg(2+) is bound by residues N87, D103, D105, D107, D120, and E123.

It belongs to the Ntdp family. Requires Mg(2+) as cofactor.

It carries out the reaction a ribonucleoside 5'-triphosphate + H2O = a ribonucleoside 5'-diphosphate + phosphate + H(+). The catalysed reaction is a ribonucleoside 5'-diphosphate + H2O = a ribonucleoside 5'-phosphate + phosphate + H(+). Functionally, has nucleoside phosphatase activity towards nucleoside triphosphates and nucleoside diphosphates. The polypeptide is Nucleoside triphosphate/diphosphate phosphatase (Streptococcus sanguinis (strain SK36)).